A 330-amino-acid polypeptide reads, in one-letter code: Phosphate acyltransferase (330 aa).

Belongs to the PlsX family. As to quaternary structure, homodimer. Probably interacts with PlsY.

It localises to the cytoplasm. It carries out the reaction a fatty acyl-[ACP] + phosphate = an acyl phosphate + holo-[ACP]. It functions in the pathway lipid metabolism; phospholipid metabolism. Functionally, catalyzes the reversible formation of acyl-phosphate (acyl-PO(4)) from acyl-[acyl-carrier-protein] (acyl-ACP). This enzyme utilizes acyl-ACP as fatty acyl donor, but not acyl-CoA. This Lysinibacillus sphaericus (strain C3-41) protein is Phosphate acyltransferase.